A 380-amino-acid chain; its full sequence is Succinyl-diaminopimelate desuccinylase (380 aa).

A Zn(2+)-binding site is contributed by His-69. Asp-71 is an active-site residue. Asp-102 contributes to the Zn(2+) binding site. Glu-135 acts as the Proton acceptor in catalysis. The Zn(2+) site is built by Glu-136, Glu-164, and His-353.

It belongs to the peptidase M20A family. DapE subfamily. In terms of assembly, homodimer. The cofactor is Zn(2+). Co(2+) serves as cofactor.

It carries out the reaction N-succinyl-(2S,6S)-2,6-diaminopimelate + H2O = (2S,6S)-2,6-diaminopimelate + succinate. The protein operates within amino-acid biosynthesis; L-lysine biosynthesis via DAP pathway; LL-2,6-diaminopimelate from (S)-tetrahydrodipicolinate (succinylase route): step 3/3. Its function is as follows. Catalyzes the hydrolysis of N-succinyl-L,L-diaminopimelic acid (SDAP), forming succinate and LL-2,6-diaminopimelate (DAP), an intermediate involved in the bacterial biosynthesis of lysine and meso-diaminopimelic acid, an essential component of bacterial cell walls. The sequence is that of Succinyl-diaminopimelate desuccinylase from Ruegeria pomeroyi (strain ATCC 700808 / DSM 15171 / DSS-3) (Silicibacter pomeroyi).